Here is a 409-residue protein sequence, read N- to C-terminus: uncharacterized protein (409 aa).

The next 10 helical transmembrane spans lie at 53-73 (IITL…YVHC), 83-103 (WCYF…NVDG), 115-135 (LGEL…AIVM), 141-161 (IGPY…YLAH), 183-203 (VLFM…WTYG), 205-225 (STTV…VTCL), 243-263 (CLLQ…WASV), 265-285 (NLIT…FGYI), 299-319 (CSLF…SILA), and 329-349 (TVAL…FSYF). Residues 388-401 (EEGSSSIGNSTDDI) are compositionally biased toward polar residues. The segment at 388–409 (EEGSSSIGNSTDDINPSEIEEI) is disordered.

It belongs to the CDP-alcohol phosphatidyltransferase class-I family.

It is found in the membrane. This is an uncharacterized protein from Dictyostelium discoideum (Social amoeba).